We begin with the raw amino-acid sequence, 441 residues long: Serine carboxypeptidase-like 3 (441 aa).

Positions 1–30 (MASNYVFSVLRSLLLLIHTVFLGQHHVSSA) are cleaved as a signal peptide. Intrachain disulfides connect Cys-88–Cys-331, Cys-252–Cys-266, and Cys-290–Cys-297. Asn-109 is a glycosylation site (N-linked (GlcNAc...) asparagine). Ser-184 is a catalytic residue. The N-linked (GlcNAc...) asparagine glycan is linked to Asn-350. Residue Asp-366 is part of the active site. N-linked (GlcNAc...) asparagine glycosylation occurs at Asn-382. His-419 is an active-site residue.

The protein belongs to the peptidase S10 family. In terms of tissue distribution, expressed in roots.

It is found in the secreted. Its function is as follows. Probable carboxypeptidase. The sequence is that of Serine carboxypeptidase-like 3 (SCPL3) from Arabidopsis thaliana (Mouse-ear cress).